A 360-amino-acid chain; its full sequence is Peptide chain release factor 1 (360 aa).

Gln-237 is subject to N5-methylglutamine.

This sequence belongs to the prokaryotic/mitochondrial release factor family. Post-translationally, methylated by PrmC. Methylation increases the termination efficiency of RF1.

The protein resides in the cytoplasm. Functionally, peptide chain release factor 1 directs the termination of translation in response to the peptide chain termination codons UAG and UAA. This Ectopseudomonas mendocina (strain ymp) (Pseudomonas mendocina) protein is Peptide chain release factor 1.